Here is a 118-residue protein sequence, read N- to C-terminus: NLIQFSNMIQCANKGSRPSLDYADYGCYCGWGGSGTPVDELDRCCKVHDDCYAEAGKKGCYPKLTLYSWDCTGNVPICNPKTECKDFTCACDAEAAKCFAKAPYKKENWNIDTKTRCK.

7 disulfides stabilise this stretch: cysteine 11-cysteine 71, cysteine 27-cysteine 117, cysteine 29-cysteine 45, cysteine 44-cysteine 98, cysteine 51-cysteine 91, cysteine 60-cysteine 84, and cysteine 78-cysteine 89. Tyrosine 28, glycine 30, and glycine 32 together coordinate Ca(2+). Histidine 48 is an active-site residue. Residue aspartate 49 coordinates Ca(2+). Aspartate 92 is an active-site residue.

This sequence belongs to the phospholipase A2 family. Group I subfamily. D49 sub-subfamily. It depends on Ca(2+) as a cofactor. In terms of tissue distribution, expressed by the venom gland.

The protein resides in the secreted. The enzyme catalyses a 1,2-diacyl-sn-glycero-3-phosphocholine + H2O = a 1-acyl-sn-glycero-3-phosphocholine + a fatty acid + H(+). Its function is as follows. PLA2 catalyzes the calcium-dependent hydrolysis of the 2-acyl groups in 3-sn-phosphoglycerides. This is Basic phospholipase A2 PA-5 from Pseudechis australis (Mulga snake).